A 575-amino-acid polypeptide reads, in one-letter code: Hemagglutinin-neuraminidase (575 aa).

The segment covering 1–10 (MDGDRSKRDS) has biased composition (basic and acidic residues). The tract at residues 1–25 (MDGDRSKRDSYWSTSPGGSTTKLVS) is disordered. Residues 1-37 (MDGDRSKRDSYWSTSPGGSTTKLVSDSERSGKVDTWL) are Intravirion-facing. The segment at 10–14 (SYWST) is incorporation in virion. The segment covering 11 to 24 (YWSTSPGGSTTKLV) has biased composition (polar residues). The helical transmembrane segment at 38–58 (LILAFTQWALSIATVIICIVI) threads the bilayer. The tract at residues 59-140 (AARQGYSMER…RQELTQLCDS (82 aa)) is involved in interaction with F protein. The Virion surface segment spans residues 59 to 575 (AARQGYSMER…SIPKLCKAES (517 aa)). N-linked (GlcNAc...) asparagine; by host glycosylation occurs at N77. Intrachain disulfides connect C192–C216, C258–C271, C357–C469, and C463–C473. The interval 254–259 (NRKSCS) is involved in neuraminidase activity. N-linked (GlcNAc...) asparagine; by host glycans are attached at residues N499 and N511. Cysteines 535 and 544 form a disulfide.

The protein belongs to the paramyxoviruses hemagglutinin-neuraminidase family. In terms of assembly, homotetramer; composed of disulfide-linked homodimers. Interacts with F protein trimer. Post-translationally, N-glycosylated; glycans consist of a mixture of high mannose-type oligosaccharides and of complex-type oligosaccharides.

The protein resides in the virion membrane. It is found in the host cell membrane. It carries out the reaction Hydrolysis of alpha-(2-&gt;3)-, alpha-(2-&gt;6)-, alpha-(2-&gt;8)- glycosidic linkages of terminal sialic acid residues in oligosaccharides, glycoproteins, glycolipids, colominic acid and synthetic substrates.. Functionally, attaches the virus to sialic acid-containing cell receptors and thereby initiating infection. Binding of HN protein to the receptor induces a conformational change that allows the F protein to trigger virion/cell membranes fusion. In terms of biological role, neuraminidase activity ensures the efficient spread of the virus by dissociating the mature virions from the neuraminic acid containing glycoproteins. This chain is Hemagglutinin-neuraminidase (HN), found in Cavia cutleri (Guinea pig).